Reading from the N-terminus, the 332-residue chain is Adenosine deaminase (332 aa).

2 residues coordinate Zn(2+): His-12 and His-14. His-14, Asp-16, and Gly-170 together coordinate substrate. His-197 provides a ligand contact to Zn(2+). Glu-200 serves as the catalytic Proton donor. Position 278 (Asp-278) interacts with Zn(2+).

It belongs to the metallo-dependent hydrolases superfamily. Adenosine and AMP deaminases family. Adenosine deaminase subfamily. The cofactor is Zn(2+).

The enzyme catalyses adenosine + H2O + H(+) = inosine + NH4(+). It carries out the reaction 2'-deoxyadenosine + H2O + H(+) = 2'-deoxyinosine + NH4(+). Functionally, catalyzes the hydrolytic deamination of adenosine and 2-deoxyadenosine. This is Adenosine deaminase from Clostridium perfringens (strain SM101 / Type A).